The following is a 132-amino-acid chain: Female-specific protein 800 (132 aa).

Its function is as follows. FS800 is likely to have some function in the production or maintenance of the schistosome egg. It may have a function unrelated to eggshell formation. The protein is Female-specific protein 800 of Schistosoma mansoni (Blood fluke).